Here is a 457-residue protein sequence, read N- to C-terminus: Argininosuccinate lyase (457 aa).

The protein belongs to the lyase 1 family. Argininosuccinate lyase subfamily.

Its subcellular location is the cytoplasm. The enzyme catalyses 2-(N(omega)-L-arginino)succinate = fumarate + L-arginine. Its pathway is amino-acid biosynthesis; L-arginine biosynthesis; L-arginine from L-ornithine and carbamoyl phosphate: step 3/3. This chain is Argininosuccinate lyase, found in Exiguobacterium sibiricum (strain DSM 17290 / CCUG 55495 / CIP 109462 / JCM 13490 / 255-15).